Consider the following 1510-residue polypeptide: Chromosome partition protein MukB (1510 aa).

An ATP-binding site is contributed by 75–82 (GGNGAGKS). Positions 346-706 (QHRLVDLSRE…LDEQISRLSQ (361 aa)) form a coiled coil. The tract at residues 707-824 (PDGSEDPRLN…EIPLFGCAAR (118 aa)) is flexible hinge. 2 coiled-coil regions span residues 825-1154 (EKRL…AAKV) and 1248-1304 (IDAI…LQNI).

This sequence belongs to the SMC family. MukB subfamily. In terms of assembly, homodimerization via its hinge domain. Binds to DNA via its C-terminal region. Interacts, and probably forms a ternary complex, with MukE and MukF via its C-terminal region. The complex formation is stimulated by calcium or magnesium. Interacts with tubulin-related protein FtsZ.

Its subcellular location is the cytoplasm. It is found in the nucleoid. Functionally, plays a central role in chromosome condensation, segregation and cell cycle progression. Functions as a homodimer, which is essential for chromosome partition. Involved in negative DNA supercoiling in vivo, and by this means organize and compact chromosomes. May achieve or facilitate chromosome segregation by condensation DNA from both sides of a centrally located replisome during cell division. This is Chromosome partition protein MukB from Haemophilus influenzae (strain ATCC 51907 / DSM 11121 / KW20 / Rd).